The primary structure comprises 194 residues: Probable thymidylate kinase (194 aa).

7–14 is a binding site for ATP; sequence GIDGSGKT.

The protein belongs to the thymidylate kinase family.

It catalyses the reaction dTMP + ATP = dTDP + ADP. This chain is Probable thymidylate kinase (tmk), found in Methanothermobacter thermautotrophicus (strain ATCC 29096 / DSM 1053 / JCM 10044 / NBRC 100330 / Delta H) (Methanobacterium thermoautotrophicum).